Here is a 122-residue protein sequence, read N- to C-terminus: MTKEQIIEAVKNMTVLELNELVKAIEEEFGVTAAAPVVVAGGAAAGAEAAAEKTEFDVILADAGAQKIKVIKVVREITGLGLKEAKDLVDNTPKPIKEGIAKEEAEEIKAALEEAGAKVEIK.

This sequence belongs to the bacterial ribosomal protein bL12 family. In terms of assembly, homodimer. Part of the 50S ribosomal subunit; present in 4 copies per ribosome. Forms part of the ribosomal stalk which helps the ribosome interact with GTP-bound translation factors. Forms a pentameric L10(L12)2(L12)2 complex, where L10 forms an elongated spine to which 2 L12 dimers bind in a sequential fashion.

Functionally, forms part of the ribosomal stalk which helps the ribosome interact with GTP-bound translation factors. Is thus essential for accurate translation. In Geobacillus stearothermophilus (Bacillus stearothermophilus), this protein is Large ribosomal subunit protein bL12.